Reading from the N-terminus, the 197-residue chain is Glycerol-3-phosphate acyltransferase (197 aa).

Helical transmembrane passes span Met-1–Val-21, Leu-69–Gly-89, Val-110–Leu-130, and Val-152–Phe-172.

The protein belongs to the PlsY family. As to quaternary structure, probably interacts with PlsX.

The protein resides in the cell membrane. It carries out the reaction an acyl phosphate + sn-glycerol 3-phosphate = a 1-acyl-sn-glycero-3-phosphate + phosphate. It functions in the pathway lipid metabolism; phospholipid metabolism. Its function is as follows. Catalyzes the transfer of an acyl group from acyl-phosphate (acyl-PO(4)) to glycerol-3-phosphate (G3P) to form lysophosphatidic acid (LPA). This enzyme utilizes acyl-phosphate as fatty acyl donor, but not acyl-CoA or acyl-ACP. This is Glycerol-3-phosphate acyltransferase from Geobacillus kaustophilus (strain HTA426).